The chain runs to 208 residues: Protein-methionine-sulfoxide reductase heme-binding subunit MsrQ (208 aa).

Transmembrane regions (helical) follow at residues 16 to 36 (IAVF…FVGG), 53 to 73 (WGLI…LWGW), 82 to 102 (MVGL…IGLD), 118 to 138 (TYIT…VTST), 156 to 176 (LVYP…KADL), and 178 to 198 (EPLI…VPAV).

This sequence belongs to the MsrQ family. Heterodimer of a catalytic subunit (MsrP) and a heme-binding subunit (MsrQ). The cofactor is FMN. Requires heme b as cofactor.

Its subcellular location is the cell inner membrane. In terms of biological role, part of the MsrPQ system that repairs oxidized periplasmic proteins containing methionine sulfoxide residues (Met-O), using respiratory chain electrons. Thus protects these proteins from oxidative-stress damage caused by reactive species of oxygen and chlorine generated by the host defense mechanisms. MsrPQ is essential for the maintenance of envelope integrity under bleach stress, rescuing a wide series of structurally unrelated periplasmic proteins from methionine oxidation. MsrQ provides electrons for reduction to the reductase catalytic subunit MsrP, using the quinone pool of the respiratory chain. This Rhodospirillum rubrum (strain ATCC 11170 / ATH 1.1.1 / DSM 467 / LMG 4362 / NCIMB 8255 / S1) protein is Protein-methionine-sulfoxide reductase heme-binding subunit MsrQ.